The primary structure comprises 233 residues: 5'-methylthioadenosine/S-adenosylhomocysteine nucleosidase (233 aa).

E12 functions as the Proton acceptor in the catalytic mechanism. Residues G78, I156, and 177-178 (ME) contribute to the substrate site. The active-site Proton donor is the D201.

Belongs to the PNP/UDP phosphorylase family. MtnN subfamily.

The enzyme catalyses S-adenosyl-L-homocysteine + H2O = S-(5-deoxy-D-ribos-5-yl)-L-homocysteine + adenine. The catalysed reaction is S-methyl-5'-thioadenosine + H2O = 5-(methylsulfanyl)-D-ribose + adenine. It carries out the reaction 5'-deoxyadenosine + H2O = 5-deoxy-D-ribose + adenine. It functions in the pathway amino-acid biosynthesis; L-methionine biosynthesis via salvage pathway; S-methyl-5-thio-alpha-D-ribose 1-phosphate from S-methyl-5'-thioadenosine (hydrolase route): step 1/2. Functionally, catalyzes the irreversible cleavage of the glycosidic bond in both 5'-methylthioadenosine (MTA) and S-adenosylhomocysteine (SAH/AdoHcy) to adenine and the corresponding thioribose, 5'-methylthioribose and S-ribosylhomocysteine, respectively. Also cleaves 5'-deoxyadenosine, a toxic by-product of radical S-adenosylmethionine (SAM) enzymes, into 5-deoxyribose and adenine. In Listeria monocytogenes serotype 4b (strain CLIP80459), this protein is 5'-methylthioadenosine/S-adenosylhomocysteine nucleosidase.